A 121-amino-acid polypeptide reads, in one-letter code: Large ribosomal subunit protein bL17 (121 aa).

This sequence belongs to the bacterial ribosomal protein bL17 family. In terms of assembly, part of the 50S ribosomal subunit. Contacts protein L32.

In Mycoplasmopsis agalactiae (strain NCTC 10123 / CIP 59.7 / PG2) (Mycoplasma agalactiae), this protein is Large ribosomal subunit protein bL17.